The following is a 305-amino-acid chain: tRNA N6-adenosine threonylcarbamoyltransferase (305 aa).

Residues His108 and His112 each coordinate Fe cation. Substrate-binding positions include 130–134 (VVSGG), Asp163, Gly176, Asp180, and Asn264. Asp288 is a binding site for Fe cation.

It belongs to the KAE1 / TsaD family. Fe(2+) is required as a cofactor.

It localises to the cytoplasm. It carries out the reaction L-threonylcarbamoyladenylate + adenosine(37) in tRNA = N(6)-L-threonylcarbamoyladenosine(37) in tRNA + AMP + H(+). Functionally, required for the formation of a threonylcarbamoyl group on adenosine at position 37 (t(6)A37) in tRNAs that read codons beginning with adenine. Is involved in the transfer of the threonylcarbamoyl moiety of threonylcarbamoyl-AMP (TC-AMP) to the N6 group of A37, together with TsaE and TsaB. TsaD likely plays a direct catalytic role in this reaction. The polypeptide is tRNA N6-adenosine threonylcarbamoyltransferase (Mycoplasma mobile (strain ATCC 43663 / 163K / NCTC 11711) (Mesomycoplasma mobile)).